The primary structure comprises 270 residues: Small ribosomal subunit protein uS2 (270 aa).

Positions Glu207–Val225 are enriched in acidic residues. The disordered stretch occupies residues Glu207–Ala270. A compositionally biased stretch (low complexity) spans Glu226–Asp258.

This sequence belongs to the universal ribosomal protein uS2 family. As to quaternary structure, component of the small ribosomal subunit. Mature ribosomes consist of a small (40S) and a large (60S) subunit. The 40S subunit contains about 33 different proteins and 1 molecule of RNA (18S). The 60S subunit contains about 49 different proteins and 3 molecules of RNA (25S, 5.8S and 5S). Interacts with RPS21.

The protein resides in the cytoplasm. Its function is as follows. Required for the assembly and/or stability of the 40S ribosomal subunit. Required for the processing of the 20S rRNA-precursor to mature 18S rRNA in a late step of the maturation of 40S ribosomal subunits. This Yarrowia lipolytica (strain CLIB 122 / E 150) (Yeast) protein is Small ribosomal subunit protein uS2.